The sequence spans 172 residues: S-ribosylhomocysteine lyase (172 aa).

Residues H54, H58, and C128 each contribute to the Fe cation site.

The protein belongs to the LuxS family. Homodimer. Requires Fe cation as cofactor.

It carries out the reaction S-(5-deoxy-D-ribos-5-yl)-L-homocysteine = (S)-4,5-dihydroxypentane-2,3-dione + L-homocysteine. Its function is as follows. Involved in the synthesis of autoinducer 2 (AI-2) which is secreted by bacteria and is used to communicate both the cell density and the metabolic potential of the environment. The regulation of gene expression in response to changes in cell density is called quorum sensing. Catalyzes the transformation of S-ribosylhomocysteine (RHC) to homocysteine (HC) and 4,5-dihydroxy-2,3-pentadione (DPD). The chain is S-ribosylhomocysteine lyase from Vibrio atlanticus (strain LGP32) (Vibrio splendidus (strain Mel32)).